The primary structure comprises 267 residues: Tryptophan synthase alpha chain (267 aa).

Residues Glu49 and Asp60 each act as proton acceptor in the active site.

This sequence belongs to the TrpA family. In terms of assembly, tetramer of two alpha and two beta chains.

The catalysed reaction is (1S,2R)-1-C-(indol-3-yl)glycerol 3-phosphate + L-serine = D-glyceraldehyde 3-phosphate + L-tryptophan + H2O. It functions in the pathway amino-acid biosynthesis; L-tryptophan biosynthesis; L-tryptophan from chorismate: step 5/5. Its function is as follows. The alpha subunit is responsible for the aldol cleavage of indoleglycerol phosphate to indole and glyceraldehyde 3-phosphate. In Acinetobacter baylyi (strain ATCC 33305 / BD413 / ADP1), this protein is Tryptophan synthase alpha chain.